The sequence spans 80 residues: Cytochrome c oxidase subunit 7A1, mitochondrial (80 aa).

Residues 1 to 21 (MLAPRVSQALIRSFSSTARNR) constitute a mitochondrion transit peptide. Residues 22 to 46 (LKNRVPEKQKLFQEDNGIPVYLKGG) lie on the Mitochondrial matrix side of the membrane. A helical membrane pass occupies residues 47 to 75 (VVDHILYRVTMGLCLGGTAYGVYCLAWAS). The Mitochondrial intermembrane portion of the chain corresponds to 76–80 (FPRNK).

The protein belongs to the cytochrome c oxidase VIIa family. Component of the complex IV (CIV, cytochrome c oxidase), a multisubunit enzyme composed of 14 subunits. The complex is composed of a catalytic core of 3 subunits MT-CO1, MT-CO2 and MT-CO3, encoded in the mitochondrial DNA, and 11 supernumerary subunits COX4I1 (or COX4I2), COX5A, COX5B, COX6A2 (or COX6A1), COX6B1 (or COX6B2), COX6C, COX7A1 (or COX7A2), COX7B, COX7C, COX8B and NDUFA4, which are encoded in the nuclear genome. The complex exists as a monomer or a dimer and forms supercomplexes (SCs) in the inner mitochondrial membrane with NADH-ubiquinone oxidoreductase (complex I, CI) and ubiquinol-cytochrome c oxidoreductase (cytochrome b-c1 complex, complex III, CIII), resulting in different assemblies (supercomplex SCI(1)III(2)IV(1) and megacomplex MCI(2)III(2)IV(2)).

It is found in the mitochondrion inner membrane. Its pathway is energy metabolism; oxidative phosphorylation. Its function is as follows. Component of the mitochondrial respiratory complex IV (CIV, also named cytochrome c oxidase complex), the last enzyme in the mitochondrial electron transport chain which drives oxidative phosphorylation. The CIV complex is the component of the respiratory chain that catalyzes the reduction of oxygen to water. Acts as an assembly factor that specifically drives the homodimerization of CIV complexes, mediating the formation of mitochondrial respiratory supercomplexes (respirasomes) containing two CIV: supercomplxes with two molecules of CIV show improved activity. Despite being highly expressed in brown adipose tissue, not required for thermogenesis. This chain is Cytochrome c oxidase subunit 7A1, mitochondrial (COX7A1), found in Saimiri sciureus (Common squirrel monkey).